The following is a 632-amino-acid chain: Chaperone protein HtpG (632 aa).

The tract at residues 1 to 339 is a; substrate-binding; it reads MAHETMSFQA…SADLPLNVSR (339 aa). A b region spans residues 340 to 559; that stretch reads EILQESRDVK…DNDMSGYLQR (220 aa). Residues 560-632 form a c region; that stretch reads MLKAAGQNAP…TNALLLSRAA (73 aa).

Belongs to the heat shock protein 90 family. Homodimer.

It is found in the cytoplasm. In terms of biological role, molecular chaperone. Has ATPase activity. This chain is Chaperone protein HtpG, found in Burkholderia ambifaria (strain ATCC BAA-244 / DSM 16087 / CCUG 44356 / LMG 19182 / AMMD) (Burkholderia cepacia (strain AMMD)).